The following is a 423-amino-acid chain: MVFSNNDEGLINKKLPKELLLRIFSFLDIVTLCRCAQISKAWNILALDGSNWQRIDLFNFQTDVEGRVVENISKRCGGFLRKLSLRGCIGVGDSSLKTFAQNCRNIEHLNLNGCTKITDSTCYSLSRFCSKLKHLDLTSCVSITNSSLKGISEGCRNLEYLNLSWCDQITKDGIEALVRGCRGLKALLLRGCTQLEDEALKHIQNYCHELVSLNLQSCSRITDEGVVQICRGCHRLQALCLSGCSNLTDASLTALGLNCPRLQILEAARCSHLTDAGFTLLARNCHELEKMDLEECILITDSTLIQLSIHCPKLQALSLSHCELITDDGILHLSNSTCGHERLRVLELDNCLLITDVALEHLENCRGLERLELYDCQQVTRAGIKRMRAQLPHVKVHAYFAPVTPPTAVAGSGQRLCRCCVIL.

Residues 9–55 form the F-box domain; it reads GLINKKLPKELLLRIFSFLDIVTLCRCAQISKAWNILALDGSNWQRI. LRR repeat units follow at residues 61-87, 88-113, 114-139, 140-165, 166-191, 192-217, 218-243, 244-269, 270-295, 296-321, 322-350, 351-375, and 376-401; these read QTDV…SLRG, CIGV…NLNG, CTKI…DLTS, CVSI…NLSW, CDQI…LLRG, CTQL…NLQS, CSRI…CLSG, CSNL…EAAR, CSHL…DLEE, CILI…SLSH, CELI…ELDN, CLLI…ELYD, and CQQV…AYFA. The interval 80 to 90 is interaction with Calmodulin; the sequence is LRKLSLRGCIG. Residue lysine 201 forms a Glycyl lysine isopeptide (Lys-Gly) (interchain with G-Cter in ubiquitin) linkage. Phosphothreonine is present on threonine 404. A lipid anchor (S-geranylgeranyl cysteine) is attached at cysteine 420. A CAAX motif motif is present at residues 420–423; the sequence is CVIL.

In terms of assembly, part of the SCF (SKP1-CUL1-F-box) E3 ubiquitin-protein ligase complex SCF(FBXL2) composed of CUL1, SKP1, RBX1 and FBXL2. Interacts with calmodulin; may antagonize substrate ubiquitination by SCF(FBXL2). May interact with PIK3R1. Interacts with PTPN13. (Microbial infection) Interacts with hepatitis C virus non-structural protein 5A (NS5A) and less efficiently, with hepatitis C virus non-structural protein 5B (NS5B); a reaction crucial for hepatitis C virus RNA replication. In terms of processing, phosphorylated by GSK-beta (GSK3B), promoting recognition by FBXO3, leading to its ubiquitination by the SCF(FBXO3) complex. Post-translationally, ubiquitinated at Lys-201 by the SCF(FBXO3) complex in response to lipopolysaccharide (LPS), leading to its degradation by the proteasome. In terms of tissue distribution, expressed in brain, heart, kidney, liver, lung, pancreas and placenta.

Its subcellular location is the membrane. It participates in protein modification; protein ubiquitination. Functionally, calcium-activated substrate recognition component of the SCF (SKP1-cullin-F-box protein) E3 ubiquitin-protein ligase complex, SCF(FBXL2), which mediates the ubiquitination and subsequent proteasomal degradation of target proteins. Unlike many F-box proteins, FBXL2 does not seem to target phosphodegron within its substrates but rather calmodulin-binding motifs and is thereby antagonized by calmodulin. This is the case for the cyclins CCND2 and CCND3 which polyubiquitination and subsequent degradation are inhibited by calmodulin. Through CCND2 and CCND3 degradation induces cell-cycle arrest in G(0). SCF(FBXL2) also mediates PIK3R2 ubiquitination and proteasomal degradation thereby regulating phosphatidylinositol 3-kinase signaling and autophagy. PCYT1A monoubiquitination by SCF(FBXL2) and subsequent degradation regulates synthesis of phosphatidylcholine, which is utilized for formation of membranes and of pulmonary surfactant. The SCF(FBXL2) complex acts as a regulator of inflammation by mediating ubiquitination and degradation of TRAF proteins (TRAF1, TRAF2, TRAF3, TRAF4, TRAF5 and TRAF6). The SCF(FBXL2) complex acts as a negative regulator of the NLRP3 inflammasome by mediating ubiquitination and degradation of NLRP3. This Homo sapiens (Human) protein is F-box/LRR-repeat protein 2.